Reading from the N-terminus, the 163-residue chain is uncharacterized protein (163 aa).

This is an uncharacterized protein from Haemophilus phage HP1 (strain HP1c1) (Bacteriophage HP1).